The primary structure comprises 132 residues: Small ribosomal subunit protein uS8c (132 aa).

Belongs to the universal ribosomal protein uS8 family. In terms of assembly, part of the 30S ribosomal subunit.

It localises to the plastid. Its subcellular location is the chloroplast. Its function is as follows. One of the primary rRNA binding proteins, it binds directly to 16S rRNA central domain where it helps coordinate assembly of the platform of the 30S subunit. The protein is Small ribosomal subunit protein uS8c (rps8) of Amborella trichopoda.